We begin with the raw amino-acid sequence, 133 residues long: DCPSGWSSYEGNCYKFFQQKMNWADAERFCSEQAKGGHLVSIKIYSKEKDFVGDLVTKNIQSSDLYAWIGLRVENKEKQCSSEWSDGSSVSYENVVERTVKKCFALEKDLGFVLWINLYCAQKNPFVCKSPPP.

Intrachain disulfides connect Cys2–Cys13, Cys30–Cys128, and Cys103–Cys120. In terms of domain architecture, C-type lectin spans 9 to 129 (YEGNCYKFFQ…CAQKNPFVCK (121 aa)).

It belongs to the snaclec family. Heterodimer of subunits alpha and beta; disulfide-linked. Botrocetin and vWF form a soluble complex. In terms of tissue distribution, expressed by the venom gland.

Its subcellular location is the secreted. Functionally, snaclec that binds to von Willebrand factor (VWF) and induces its interaction with GPIbalpha (GP1BA) (via the vWF A1 domain), resulting in platelet aggregation. The sequence is that of Snaclec botrocetin subunit alpha from Bothrops jararaca (Jararaca).